The following is a 22-amino-acid chain: GLWEKVKEKANELVSGIVEGVK.

Position 22 is a lysine amide (Lys22).

Expressed by the skin dorsal glands.

The protein resides in the secreted. In terms of biological role, shows significant activity against Gram-positive organisms, but is less effective against Gram-negative organisms. The sequence is that of Caerin-3.5 from Ranoidea gracilenta (Dainty green tree frog).